The primary structure comprises 280 residues: Thymidylate synthase (280 aa).

R21 contributes to the dUMP binding site. H51 is a binding site for (6R)-5,10-methylene-5,6,7,8-tetrahydrofolate. 142–143 (RR) serves as a coordination point for dUMP. The active-site Nucleophile is C162. Residues 182–185 (RSAD), N193, and 223–225 (HLY) each bind dUMP. D185 contacts (6R)-5,10-methylene-5,6,7,8-tetrahydrofolate. A (6R)-5,10-methylene-5,6,7,8-tetrahydrofolate-binding site is contributed by A279.

The protein belongs to the thymidylate synthase family. Bacterial-type ThyA subfamily. In terms of assembly, homodimer.

It is found in the cytoplasm. The enzyme catalyses dUMP + (6R)-5,10-methylene-5,6,7,8-tetrahydrofolate = 7,8-dihydrofolate + dTMP. It functions in the pathway pyrimidine metabolism; dTTP biosynthesis. Its function is as follows. Catalyzes the reductive methylation of 2'-deoxyuridine-5'-monophosphate (dUMP) to 2'-deoxythymidine-5'-monophosphate (dTMP) while utilizing 5,10-methylenetetrahydrofolate (mTHF) as the methyl donor and reductant in the reaction, yielding dihydrofolate (DHF) as a by-product. This enzymatic reaction provides an intracellular de novo source of dTMP, an essential precursor for DNA biosynthesis. This chain is Thymidylate synthase, found in Acinetobacter baylyi (strain ATCC 33305 / BD413 / ADP1).